The chain runs to 163 residues: Putative ribose 5-phosphate isomerase (163 aa).

Residue 16-17 participates in D-ribulose 5-phosphate binding; the sequence is DD. Cys76 serves as the catalytic Proton acceptor. Residues 77-81, Asn110, Arg120, and Lys148 each bind D-ribulose 5-phosphate; that span reads GTGLG.

This sequence belongs to the LacAB/RpiB family. As to quaternary structure, homodimer or homotetramer.

This Coccidioides immitis (strain RS) (Valley fever fungus) protein is Putative ribose 5-phosphate isomerase.